The following is a 132-amino-acid chain: Protein FasE (132 aa).

In Escherichia coli, this protein is Protein FasE (fasE).